We begin with the raw amino-acid sequence, 399 residues long: Glutamine synthetase 1, mitochondrial (399 aa).

The N-terminal 27 residues, 1–27 (MALRVAGLFLKKELVAPATQQLRLLRT), are a transit peptide targeting the mitochondrion. Residues 62–143 (VQATYLWIDG…VLCDTYSADG (82 aa)) form the GS beta-grasp domain. The region spanning 150–399 (KRAAFQAAID…AIVRTCLLNE (250 aa)) is the GS catalytic domain.

Belongs to the glutamine synthetase family. In terms of assembly, homooctamer.

Its subcellular location is the mitochondrion. The catalysed reaction is L-glutamate + NH4(+) + ATP = L-glutamine + ADP + phosphate + H(+). This chain is Glutamine synthetase 1, mitochondrial (Gs1), found in Drosophila melanogaster (Fruit fly).